Here is a 317-residue protein sequence, read N- to C-terminus: Methionyl-tRNA formyltransferase (317 aa).

(6S)-5,6,7,8-tetrahydrofolate is bound at residue 112 to 115 (SLLP).

Belongs to the Fmt family.

It carries out the reaction L-methionyl-tRNA(fMet) + (6R)-10-formyltetrahydrofolate = N-formyl-L-methionyl-tRNA(fMet) + (6S)-5,6,7,8-tetrahydrofolate + H(+). In terms of biological role, attaches a formyl group to the free amino group of methionyl-tRNA(fMet). The formyl group appears to play a dual role in the initiator identity of N-formylmethionyl-tRNA by promoting its recognition by IF2 and preventing the misappropriation of this tRNA by the elongation apparatus. The sequence is that of Methionyl-tRNA formyltransferase from Mycoplasma mycoides subsp. mycoides SC (strain CCUG 32753 / NCTC 10114 / PG1).